We begin with the raw amino-acid sequence, 144 residues long: Large ribosomal subunit protein uL15 (144 aa).

The tract at residues 1 to 57 (MRFNELQPAKGSRFAGKRLGRGIGSGLGKTSGKGHKGQKARSGGYHKVGFEGGQMPL) is disordered. Residues 21-31 (RGIGSGLGKTS) are compositionally biased toward gly residues.

It belongs to the universal ribosomal protein uL15 family. Part of the 50S ribosomal subunit.

Functionally, binds to the 23S rRNA. This is Large ribosomal subunit protein uL15 from Dichelobacter nodosus (strain VCS1703A).